The sequence spans 180 residues: MENFFNQFFENIGEDKNREGLKETPKRVQELWKFLYKGYKEDPKVALKSAYFQGVCDEMIVAQNIEFYSTCEHHLLPFLGNISLGYIPKEKIVGISAIAKLIEIYSRRLQIQERLTTQIAETFDEIIEPRGVIVVCEAKHLCMSMQGVQKQNAIIKTSVLKGLFKKDPKTRAEFMQLLKS.

The Zn(2+) site is built by Cys71, His74, and Cys142.

Belongs to the GTP cyclohydrolase I family. In terms of assembly, homomer.

It carries out the reaction GTP + H2O = 7,8-dihydroneopterin 3'-triphosphate + formate + H(+). It functions in the pathway cofactor biosynthesis; 7,8-dihydroneopterin triphosphate biosynthesis; 7,8-dihydroneopterin triphosphate from GTP: step 1/1. This Helicobacter pylori (strain Shi470) protein is GTP cyclohydrolase 1.